We begin with the raw amino-acid sequence, 235 residues long: uncharacterized protein (235 aa).

This is an uncharacterized protein from Invertebrate iridescent virus 6 (IIV-6).